The chain runs to 117 residues: MARIAGINIPTHKHIVIGLQSIFGIGDTRAREICITLKLDPVTKVANITENQLELIRVEIAKYEVEGDLRRQLAMDIKRLKDLGCYRGVRHRKSLPLRGQRTKTNARTRKGPRRLIK.

Residues Ser94–Lys117 are disordered.

It belongs to the universal ribosomal protein uS13 family. In terms of assembly, part of the 30S ribosomal subunit. Forms a loose heterodimer with protein S19. Forms two bridges to the 50S subunit in the 70S ribosome.

Its function is as follows. Located at the top of the head of the 30S subunit, it contacts several helices of the 16S rRNA. In the 70S ribosome it contacts the 23S rRNA (bridge B1a) and protein L5 of the 50S subunit (bridge B1b), connecting the 2 subunits; these bridges are implicated in subunit movement. Contacts the tRNAs in the A and P-sites. This is Small ribosomal subunit protein uS13 from Vesicomyosocius okutanii subsp. Calyptogena okutanii (strain HA).